Here is a 142-residue protein sequence, read N- to C-terminus: Transcriptional regulator MraZ (142 aa).

2 SpoVT-AbrB domains span residues 5 to 51 (ASAL…PRPE) and 77 to 120 (AMDV…DSQT).

The protein belongs to the MraZ family. In terms of assembly, forms oligomers.

Its subcellular location is the cytoplasm. It is found in the nucleoid. In Burkholderia cenocepacia (strain HI2424), this protein is Transcriptional regulator MraZ.